A 226-amino-acid polypeptide reads, in one-letter code: Fibrillarin-like rRNA/tRNA 2'-O-methyltransferase (226 aa).

S-adenosyl-L-methionine is bound by residues 85–86 (TT), 104–105 (EF), 129–130 (DA), and 149–152 (DVAQ).

This sequence belongs to the methyltransferase superfamily. Fibrillarin family. As to quaternary structure, interacts with nop5. Component of box C/D small ribonucleoprotein (sRNP) particles that contain rpl7ae, FlpA and nop5, plus a guide RNA.

Its function is as follows. Involved in pre-rRNA and tRNA processing. Utilizes the methyl donor S-adenosyl-L-methionine to catalyze the site-specific 2'-hydroxyl methylation of ribose moieties in rRNA and tRNA. Site specificity is provided by a guide RNA that base pairs with the substrate. Methylation occurs at a characteristic distance from the sequence involved in base pairing with the guide RNA. This Thermococcus gammatolerans (strain DSM 15229 / JCM 11827 / EJ3) protein is Fibrillarin-like rRNA/tRNA 2'-O-methyltransferase.